The primary structure comprises 205 residues: Small ribosomal subunit protein uS4 (205 aa).

A disordered region spans residues 18-45 (NIWGRPKSPVNRREYGPGQHGQRRKGKL). The S4 RNA-binding domain maps to 94–157 (RRLDTVVYRA…KQLAFVLEAS (64 aa)).

This sequence belongs to the universal ribosomal protein uS4 family. In terms of assembly, part of the 30S ribosomal subunit. Contacts protein S5. The interaction surface between S4 and S5 is involved in control of translational fidelity.

One of the primary rRNA binding proteins, it binds directly to 16S rRNA where it nucleates assembly of the body of the 30S subunit. Functionally, with S5 and S12 plays an important role in translational accuracy. The chain is Small ribosomal subunit protein uS4 from Rhodopseudomonas palustris (strain BisA53).